Here is a 185-residue protein sequence, read N- to C-terminus: Anaphase-promoting complex subunit 10 (185 aa).

An N-acetylthreonine modification is found at Thr2. In terms of domain architecture, DOC spans 2 to 185; that stretch reads TTPNKTPPGA…IDFMMYRSIR (184 aa). N6-acetyllysine is present on Lys169.

It belongs to the APC10 family. As to quaternary structure, the mammalian APC/C is composed at least of 14 distinct subunits ANAPC1, ANAPC2, CDC27/APC3, ANAPC4, ANAPC5, CDC16/APC6, ANAPC7, CDC23/APC8, ANAPC10, ANAPC11, CDC26/APC12, ANAPC13, ANAPC15 and ANAPC16 that assemble into a complex of at least 19 chains with a combined molecular mass of around 1.2 MDa; APC/C interacts with FZR1 and FBXO5. The C-terminus of APC10 binds to CDC27/APC3. Interacts with PIWIL1; interaction only takes place when PIWIL1 binds piRNA. Interacts with FBXO43; the interaction is direct.

It participates in protein modification; protein ubiquitination. Component of the anaphase promoting complex/cyclosome (APC/C), a cell cycle-regulated E3 ubiquitin ligase that controls progression through mitosis and the G1 phase of the cell cycle. The APC/C complex acts by mediating ubiquitination and subsequent degradation of target proteins: it mainly mediates the formation of 'Lys-11'-linked polyubiquitin chains and, to a lower extent, the formation of 'Lys-48'- and 'Lys-63'-linked polyubiquitin chains. The APC/C complex catalyzes assembly of branched 'Lys-11'-/'Lys-48'-linked branched ubiquitin chains on target proteins. The protein is Anaphase-promoting complex subunit 10 (Anapc10) of Mus musculus (Mouse).